Here is a 15639-residue protein sequence, read N- to C-terminus: FR901469 synthetase (15639 aa).

A Carrier 1 domain is found at 5 to 81; the sequence is HTSDGLRKLL…DLVDKIIEQQ (77 aa). Residue serine 42 is modified to O-(pantetheine 4'-phosphoryl)serine. The segment covering 82–94 has biased composition (acidic residues); the sequence is LEEEEEDDDSLDN. The tract at residues 82 to 105 is disordered; sequence LEEEEEDDDSLDNESERDHSQKDL. Residues 140–553 are condensation 1; sequence PCLSMQEGCL…RDFLPLTEDD (414 aa). An adenylation 1 region spans residues 579 to 971; it reads TISKQPDAVA…LGRRDTQVKI (393 aa). Residues 1108–1184 enclose the Carrier 2 domain; that stretch reads TPATAIEKEL…ELALVARSTT (77 aa). Serine 1145 carries the post-translational modification O-(pantetheine 4'-phosphoryl)serine. Residues 1219–1626 are epimerase 1; it reads RSSNRFNQSV…TITHLVKRLA (408 aa). Residues 1667 to 2097 form a condensation 2 region; sequence EDVLPCTPIQ…LGNLSLLTNN (431 aa). The tract at residues 2122–2518 is adenylation 2; the sequence is QEAAKEYTNA…GRRDNQIKIR (397 aa). Residues 2654 to 2730 form the Carrier 3 domain; the sequence is VPATALEKQL…ELALKAKSTT (77 aa). Serine 2691 carries the O-(pantetheine 4'-phosphoryl)serine modification. The segment at 2761–3176 is epimerase 2; sequence VSAGEHRYNQ…TELLHRLEQM (416 aa). A condensation 3 region spans residues 3215–3640; sequence QDIYPCSPTQ…DDLIMMSPED (426 aa). An adenylation 3 region spans residues 3669–4059; the sequence is TQPHAPAVAA…MGRIDSQIKI (391 aa). One can recognise a Carrier 4 domain in the interval 4193-4269; sequence PPSNDAERMV…QLAAIVTQRG (77 aa). Serine 4230 is subject to O-(pantetheine 4'-phosphoryl)serine. The tract at residues 4316–4714 is condensation 4; that stretch reads EDVYPCTPLQ…ILAHGTGLEE (399 aa). Residues 4756-5149 form an adenylation 4 region; that stretch reads TEAASTRPDA…GRLDTQAKLR (394 aa). Positions 5284 to 5360 constitute a Carrier 5 domain; the sequence is EPATIMERQL…DLASHIDHHT (77 aa). An O-(pantetheine 4'-phosphoryl)serine modification is found at serine 5321. The tract at residues 5402–5802 is condensation 5; that stretch reads EDIYPCTPLQ…TVFAQLCDSS (401 aa). Residues 5847–6238 are adenylation 5; the sequence is KYPNEPAVHA…LGRRDSQMKV (392 aa). A Carrier 6 domain is found at 6375–6451; that stretch reads QPSTTAEIKL…DMAKIVEEHV (77 aa). O-(pantetheine 4'-phosphoryl)serine is present on serine 6412. The tract at residues 6494–6889 is condensation 6; that stretch reads EDVYPATPLQ…RFAKVYQQLS (396 aa). The interval 6952-7335 is adenylation 6; sequence WDGSMTYAEL…GRRDTQIKIR (384 aa). The Carrier 7 domain maps to 7473 to 7546; sequence TAMEEQLRTV…QLALLASTDE (74 aa). Serine 7507 carries the O-(pantetheine 4'-phosphoryl)serine modification. The segment at 7580–7992 is epimerase 3; it reads MGENRYNQSV…SKTLEELTTQ (413 aa). The condensation 7 stretch occupies residues 8034 to 8459; it reads EDVFPASPMQ…QRMRNISLAS (426 aa). The segment at 8486–8882 is adenylation 7; the sequence is QKSVHARPDA…GRRDTQVKIR (397 aa). The Carrier 8 domain occupies 9015–9091; sequence QPATDAERQL…DLAKTIQDSE (77 aa). The residue at position 9052 (serine 9052) is an O-(pantetheine 4'-phosphoryl)serine. The segment at 9136–9535 is condensation 8; sequence EDVYPCTPLQ…FAAIFRQLCD (400 aa). An adenylation 8 region spans residues 9583-9974; the sequence is KNPHAIAVNA…GRRDNQMKIR (392 aa). A Carrier 9 domain is found at 10110-10186; that stretch reads EPATPMEMQL…GLAALIQKQI (77 aa). Residue serine 10147 is modified to O-(pantetheine 4'-phosphoryl)serine. The tract at residues 10186–10208 is disordered; the sequence is IDEEEEYDDSEEEEEDDEEEVRE. Acidic residues predominate over residues 10187–10206; the sequence is DEEEEYDDSEEEEEDDEEEV. Residues 10240–10662 are condensation 9; it reads VEDVYPCTPL…VLSETDKTKI (423 aa). The interval 10683-11082 is adenylation 9; sequence KQAIERPNAP…GRRDTQIKIR (400 aa). One can recognise a Carrier 10 domain in the interval 11217–11293; sequence EPATGMERHL…DLARETESQG (77 aa). Residue serine 11254 is modified to O-(pantetheine 4'-phosphoryl)serine. The segment at 11329 to 11725 is condensation 10; that stretch reads EDVYPCTPLQ…ETIFQQLSSV (397 aa). The interval 11770–12165 is adenylation 10; the sequence is FKRTADKQPE…GRRDTQIKVR (396 aa). The region spanning 12298–12374 is the Carrier 11 domain; it reads EPSTEMERRI…DLAAAVQGRI (77 aa). The residue at position 12335 (serine 12335) is an O-(pantetheine 4'-phosphoryl)serine. The segment at 12418-12830 is condensation 11; it reads EDVYPATPLQ…IQDIEMVSEQ (413 aa). An adenylation 11 region spans residues 12861-13249; that stretch reads SRADEIAICA…GRRDTQIKIR (389 aa). One can recognise a Carrier 12 domain in the interval 13383-13459; that stretch reads MPGTVQEEQL…QLGQKVKEAV (77 aa). The residue at position 13420 (serine 13420) is an O-(pantetheine 4'-phosphoryl)serine. Positions 13476 to 13901 are epimerase 4; the sequence is APIQQMFFEQ…LKDMTSTLLQ (426 aa). Positions 13940-14369 are condensation 12; that stretch reads EDILPCSPIQ…SIVGEHDLQQ (430 aa). The adenylation 12 stretch occupies residues 14390–14789; the sequence is RDAAHRTPDA…GRGDGQIKIR (400 aa). The Carrier 13 domain occupies 14916 to 14992; sequence LPASADEGAL…DMASVASAAR (77 aa). An O-(pantetheine 4'-phosphoryl)serine modification is found at serine 14953. The condensation 13 stretch occupies residues 15062-15433; that stretch reads QHAVDLAALK…DIMVRLASQQ (372 aa). Disordered regions lie at residues 15434 to 15511 and 15617 to 15639; these read EGTV…ENRQ and VQTNGHAGKGVTNGVNGGSKGHI. Over residues 15455–15472 the composition is skewed to low complexity; the sequence is NGTNGSNGDGTDAANGIG. The span at 15482–15494 shows a compositional bias: basic and acidic residues; the sequence is AVEKSSGDAEVEK. The segment covering 15495–15511 has biased composition (polar residues); the sequence is VSTNGHADNNTSAENRQ.

Belongs to the NRP synthetase family.

It participates in antifungal biosynthesis. In terms of biological role, nonribosomal peptide synthetase; part of the gene cluster that mediates the biosynthesis of the antifungal antibiotic FR901469, an inhibitor of beta-1,3-glucansynthase, exerting antifungal activity against the pathogenes Candida albicans and Aspergillus fumigatus. FR901469 is a cyclic depsipeptide containing 12 amino acid residues and a fatty acid chain. The NRPS frbI contains 12 modules responsible for the formation of the depsipeptide backbone which is denoted as Acyl-Thr-Ala-Tyr-Val-4OHPro-Thr-Thr-3OHPro-threo3OHGln-Gly-Thr-Orn-OH (C71H116N14O23). The PKS frbB is probably involved in the production of the hydrocarbon chain, and the acyl-CoA ligase frbC might be involved in the transport of the chain to the peptide ptoduct of frbI. Because FR901469 contains 3 hydroxylated amino acid residues, the 3 oxygenases frbA, frbH, and frbJ might be participating in amino acid hydroxylation. As no thioesterase domains were detected in frbI or frbB, the thioesterases frbD and frbE may instead release and cyclize the products of the NRPS and PKS, respectively. The polypeptide is FR901469 synthetase (Dothideomycetidae sp. (strain 11243) (Fungal sp. (strain No.11243))).